The chain runs to 97 residues: Co-chaperonin GroES (97 aa).

This sequence belongs to the GroES chaperonin family. Heptamer of 7 subunits arranged in a ring. Interacts with the chaperonin GroEL.

It is found in the cytoplasm. Functionally, together with the chaperonin GroEL, plays an essential role in assisting protein folding. The GroEL-GroES system forms a nano-cage that allows encapsulation of the non-native substrate proteins and provides a physical environment optimized to promote and accelerate protein folding. GroES binds to the apical surface of the GroEL ring, thereby capping the opening of the GroEL channel. The chain is Co-chaperonin GroES from Buchnera aphidicola subsp. Baizongia pistaciae (strain Bp).